A 204-amino-acid chain; its full sequence is N-(5'-phosphoribosyl)anthranilate isomerase (204 aa).

This sequence belongs to the TrpF family.

The catalysed reaction is N-(5-phospho-beta-D-ribosyl)anthranilate = 1-(2-carboxyphenylamino)-1-deoxy-D-ribulose 5-phosphate. It participates in amino-acid biosynthesis; L-tryptophan biosynthesis; L-tryptophan from chorismate: step 3/5. The polypeptide is N-(5'-phosphoribosyl)anthranilate isomerase (Bacillus cereus (strain B4264)).